A 473-amino-acid chain; its full sequence is Photosystem II CP43 reaction center protein (473 aa).

Residues Met1–Glu14 constitute a propeptide that is removed on maturation. Residue Thr15 is modified to N-acetylthreonine. The residue at position 15 (Thr15) is a Phosphothreonine. 5 helical membrane passes run Leu69 to Ala93, Ile134 to Asn155, Lys178 to Thr200, Lys255 to Ser275, and Trp291 to Ala312. Glu367 provides a ligand contact to [CaMn4O5] cluster. The chain crosses the membrane as a helical span at residues Arg447–Pro471.

This sequence belongs to the PsbB/PsbC family. PsbC subfamily. As to quaternary structure, PSII is composed of 1 copy each of membrane proteins PsbA, PsbB, PsbC, PsbD, PsbE, PsbF, PsbH, PsbI, PsbJ, PsbK, PsbL, PsbM, PsbT, PsbX, PsbY, PsbZ, Psb30/Ycf12, at least 3 peripheral proteins of the oxygen-evolving complex and a large number of cofactors. It forms dimeric complexes. Binds multiple chlorophylls and provides some of the ligands for the Ca-4Mn-5O cluster of the oxygen-evolving complex. It may also provide a ligand for a Cl- that is required for oxygen evolution. PSII binds additional chlorophylls, carotenoids and specific lipids. is required as a cofactor.

Its subcellular location is the plastid. The protein resides in the chloroplast thylakoid membrane. Functionally, one of the components of the core complex of photosystem II (PSII). It binds chlorophyll and helps catalyze the primary light-induced photochemical processes of PSII. PSII is a light-driven water:plastoquinone oxidoreductase, using light energy to abstract electrons from H(2)O, generating O(2) and a proton gradient subsequently used for ATP formation. The polypeptide is Photosystem II CP43 reaction center protein (Huperzia lucidula (Shining clubmoss)).